The primary structure comprises 238 residues: ATP synthase subunit a (238 aa).

Helical transmembrane passes span 35–55 (SNVI…TLAT), 61–81 (VPSG…SFVV), 94–114 (FLCA…VPGL), 128–148 (ALTV…AGYI), 151–171 (FMGP…ISHL), 190–210 (IVLV…MYFL), and 211–231 (FSLA…IYLK).

It belongs to the ATPase A chain family. F-type ATPases have 2 components, CF(1) - the catalytic core - and CF(0) - the membrane proton channel. CF(1) has five subunits: alpha(3), beta(3), gamma(1), delta(1), epsilon(1). CF(0) has three main subunits: a(1), b(2) and c(9-12). The alpha and beta chains form an alternating ring which encloses part of the gamma chain. CF(1) is attached to CF(0) by a central stalk formed by the gamma and epsilon chains, while a peripheral stalk is formed by the delta and b chains.

It is found in the cell inner membrane. Functionally, key component of the proton channel; it plays a direct role in the translocation of protons across the membrane. The chain is ATP synthase subunit a from Solidesulfovibrio magneticus (strain ATCC 700980 / DSM 13731 / RS-1) (Desulfovibrio magneticus).